Consider the following 144-residue polypeptide: 3-hydroxyacyl-[acyl-carrier-protein] dehydratase FabZ (144 aa).

The active site involves histidine 51.

Belongs to the thioester dehydratase family. FabZ subfamily.

The protein resides in the cytoplasm. It catalyses the reaction a (3R)-hydroxyacyl-[ACP] = a (2E)-enoyl-[ACP] + H2O. In terms of biological role, involved in unsaturated fatty acids biosynthesis. Catalyzes the dehydration of short chain beta-hydroxyacyl-ACPs and long chain saturated and unsaturated beta-hydroxyacyl-ACPs. The polypeptide is 3-hydroxyacyl-[acyl-carrier-protein] dehydratase FabZ (Clostridium botulinum (strain Loch Maree / Type A3)).